A 184-amino-acid chain; its full sequence is ATP synthase subunit delta (184 aa).

The protein belongs to the ATPase delta chain family. As to quaternary structure, F-type ATPases have 2 components, F(1) - the catalytic core - and F(0) - the membrane proton channel. F(1) has five subunits: alpha(3), beta(3), gamma(1), delta(1), epsilon(1). F(0) has three main subunits: a(1), b(2) and c(10-14). The alpha and beta chains form an alternating ring which encloses part of the gamma chain. F(1) is attached to F(0) by a central stalk formed by the gamma and epsilon chains, while a peripheral stalk is formed by the delta and b chains.

It is found in the cell inner membrane. Functionally, f(1)F(0) ATP synthase produces ATP from ADP in the presence of a proton or sodium gradient. F-type ATPases consist of two structural domains, F(1) containing the extramembraneous catalytic core and F(0) containing the membrane proton channel, linked together by a central stalk and a peripheral stalk. During catalysis, ATP synthesis in the catalytic domain of F(1) is coupled via a rotary mechanism of the central stalk subunits to proton translocation. This protein is part of the stalk that links CF(0) to CF(1). It either transmits conformational changes from CF(0) to CF(1) or is implicated in proton conduction. The polypeptide is ATP synthase subunit delta (Rickettsia felis (strain ATCC VR-1525 / URRWXCal2) (Rickettsia azadi)).